Reading from the N-terminus, the 149-residue chain is Nucleoside diphosphate kinase 1 (149 aa).

ATP is bound by residues lysine 9, phenylalanine 57, arginine 85, threonine 91, arginine 102, and asparagine 112. Histidine 115 (pros-phosphohistidine intermediate) is an active-site residue.

This sequence belongs to the NDK family. In terms of assembly, homohexamer. Can also form dodecamers. It depends on Mg(2+) as a cofactor.

The protein resides in the nucleus. It carries out the reaction a 2'-deoxyribonucleoside 5'-diphosphate + ATP = a 2'-deoxyribonucleoside 5'-triphosphate + ADP. The catalysed reaction is a ribonucleoside 5'-diphosphate + ATP = a ribonucleoside 5'-triphosphate + ADP. In terms of biological role, major role in the synthesis of nucleoside triphosphates other than ATP. The ATP gamma phosphate is transferred to the NDP beta phosphate via a ping-pong mechanism, using a phosphorylated active-site intermediate. Involved in transcription regulation. Has G-quadruplex (G4) DNA-binding activity, which is independent of its nucleotide-binding and kinase activity. Binds folded G4 with low nanomolar affinity and corresponding unfolded G-rich DNA more weakly. Stabilizes folded G4s regardless of whether they are prefolded or not. The sequence is that of Nucleoside diphosphate kinase 1 from Zea mays (Maize).